Reading from the N-terminus, the 215-residue chain is uncharacterized protein (215 aa).

This is an uncharacterized protein from Escherichia coli (strain K12).